A 107-amino-acid chain; its full sequence is Regulatory protein SoxS (107 aa).

In terms of domain architecture, HTH araC/xylS-type spans 8-106 (QTLIEWIDEH…DRTPSDYRHR (99 aa)). 2 consecutive DNA-binding regions (H-T-H motif) follow at residues 25–46 (DVVA…RTVT) and 73–96 (IFDI…RREF).

It localises to the cytoplasm. Transcriptional activator of the superoxide response regulon of E.coli that includes at least 10 genes such as sodA, nfo, zwf and micF. Binds the DNA sequence 5'-GCACN(7)CAA-3'. It also facilitates the subsequent binding of RNA polymerase to the micF and the nfo promoters. The polypeptide is Regulatory protein SoxS (soxS) (Salmonella typhimurium (strain LT2 / SGSC1412 / ATCC 700720)).